We begin with the raw amino-acid sequence, 101 residues long: ATP-dependent Clp protease adapter protein ClpS (101 aa).

This sequence belongs to the ClpS family. As to quaternary structure, binds to the N-terminal domain of the chaperone ClpA.

Involved in the modulation of the specificity of the ClpAP-mediated ATP-dependent protein degradation. The polypeptide is ATP-dependent Clp protease adapter protein ClpS (Corynebacterium jeikeium (strain K411)).